A 526-amino-acid chain; its full sequence is MSYPQEVNKRRTFAIISHPDAGKTTITEKVLLYGNAIQTAGSVKGKGSSAHAKSDWMEMEKQRGISITTSVMQFPYNNCLVNLLDTPGHEDFSEDTYRTLTAVDSCLMVIDSAKGVEERTIKLMEVTRLRDTPILTFMNKLDRDIRDPMELLDEVESVLKIRCAPITWPIGCGKLFKGVYHIAKDETYLYQSGQGSTIQEVRIVKGLSSPELDAAVGDDLANQLREELELVQGASNEFDHEAFINGELTPVFFGTALGNFGVDHFLDGLTEWAPKPQARQTDVRTVESSEEKFSGFVFKIQANMDPKHRDRVAFMRVVSGKYEKGMKLKHVRIGKDVVISDALTFMAGDRAHAEEAYAGDIIGLHNHGTIQIGDTFTQGEVMKFTGIPNFAPELFRRIRLKDPLKQKQLLKGLVQLSEEGAVQVFRPLMNNDLIVGAVGVLQFDVVVSRLKTEYNVEAIYEAVNVATARWVECGDAKKFEEFKRKNEQNLALDGGDNLTYIAPTMVNLNLAQERYPDINFFKTREH.

In terms of domain architecture, tr-type G spans 8-277 (NKRRTFAIIS…GLTEWAPKPQ (270 aa)). GTP contacts are provided by residues 17–24 (SHPDAGKT), 85–89 (DTPGH), and 139–142 (NKLD).

The protein belongs to the TRAFAC class translation factor GTPase superfamily. Classic translation factor GTPase family. PrfC subfamily.

The protein localises to the cytoplasm. Increases the formation of ribosomal termination complexes and stimulates activities of RF-1 and RF-2. It binds guanine nucleotides and has strong preference for UGA stop codons. It may interact directly with the ribosome. The stimulation of RF-1 and RF-2 is significantly reduced by GTP and GDP, but not by GMP. The sequence is that of Peptide chain release factor 3 from Actinobacillus pleuropneumoniae serotype 3 (strain JL03).